A 258-amino-acid chain; its full sequence is Acetylglutamate kinase (258 aa).

Residues 44–45, R66, and N158 each bind substrate; that span reads GG. ATP is bound by residues 181-186 and 209-211; these read DVSGIL and IIT.

It belongs to the acetylglutamate kinase family. ArgB subfamily. Homodimer.

The protein resides in the cytoplasm. The enzyme catalyses N-acetyl-L-glutamate + ATP = N-acetyl-L-glutamyl 5-phosphate + ADP. It functions in the pathway amino-acid biosynthesis; L-arginine biosynthesis; N(2)-acetyl-L-ornithine from L-glutamate: step 2/4. Functionally, catalyzes the ATP-dependent phosphorylation of N-acetyl-L-glutamate. The protein is Acetylglutamate kinase of Escherichia coli O6:K15:H31 (strain 536 / UPEC).